The following is a 96-amino-acid chain: MAVEVKYVVIREGEEKMSFTSKKEADAYDKMLDTADLLDTWLTNSPVQMEDEQREALSLWLAEQKDVLSTILKTGKLPSPQVVGAESEEEDASHAA.

This is an uncharacterized protein from Escherichia coli O157:H7.